The primary structure comprises 1132 residues: Major DNA-binding protein (1132 aa).

The tract at residues 1103 to 1132 (VEELFPSPGVPSLTVGKKRKIASLLSDLDL) is required for nuclear localization.

This sequence belongs to the herpesviridae major DNA-binding protein family. Homooligomers. Forms double-helical filaments necessary for the formation of replication compartments within the host nucleus. Interacts with the origin-binding protein. Interacts with the helicase primase complex; this interaction stimulates primer synthesis activity of the helicase-primase complex. Interacts with the DNA polymerase. Interacts with the alkaline exonuclease; this interaction increases its nuclease processivity.

Its subcellular location is the host nucleus. Its function is as follows. Plays several crucial roles in viral infection. Participates in the opening of the viral DNA origin to initiate replication by interacting with the origin-binding protein. May disrupt loops, hairpins and other secondary structures present on ssDNA to reduce and eliminate pausing of viral DNA polymerase at specific sites during elongation. Promotes viral DNA recombination by performing strand-transfer, characterized by the ability to transfer a DNA strand from a linear duplex to a complementary single-stranded DNA circle. Can also catalyze the renaturation of complementary single strands. Additionally, reorganizes the host cell nucleus, leading to the formation of prereplicative sites and replication compartments. This process is driven by the protein which can form double-helical filaments in the absence of DNA. This chain is Major DNA-binding protein, found in Human herpesvirus 8 type P (isolate GK18) (HHV-8).